A 51-amino-acid chain; its full sequence is Glutamine synthetase (51 aa).

Belongs to the glutamine synthetase family. As to quaternary structure, homooctamer.

The protein localises to the cytoplasm. The enzyme catalyses L-glutamate + NH4(+) + ATP = L-glutamine + ADP + phosphate + H(+). The sequence is that of Glutamine synthetase from Vitis sp. (Grape).